We begin with the raw amino-acid sequence, 245 residues long: Probable septum site-determining protein MinC (245 aa).

Positions 113-132 are enriched in basic and acidic residues; it reads RERPLEPLVGEEKKKPEKPP. The interval 113–138 is disordered; sequence RERPLEPLVGEEKKKPEKPPEPTIKP.

Belongs to the MinC family. Interacts with MinD and FtsZ.

Its function is as follows. Cell division inhibitor that blocks the formation of polar Z ring septums. Rapidly oscillates between the poles of the cell to destabilize FtsZ filaments that have formed before they mature into polar Z rings. Prevents FtsZ polymerization. This is Probable septum site-determining protein MinC from Pseudomonas fluorescens (strain SBW25).